We begin with the raw amino-acid sequence, 292 residues long: 4-hydroxy-tetrahydrodipicolinate synthase (292 aa).

Residue T45 coordinates pyruvate. The active-site Proton donor/acceptor is Y133. K161 functions as the Schiff-base intermediate with substrate in the catalytic mechanism. I203 provides a ligand contact to pyruvate.

The protein belongs to the DapA family. In terms of assembly, homotetramer; dimer of dimers.

It is found in the cytoplasm. The catalysed reaction is L-aspartate 4-semialdehyde + pyruvate = (2S,4S)-4-hydroxy-2,3,4,5-tetrahydrodipicolinate + H2O + H(+). It participates in amino-acid biosynthesis; L-lysine biosynthesis via DAP pathway; (S)-tetrahydrodipicolinate from L-aspartate: step 3/4. Functionally, catalyzes the condensation of (S)-aspartate-beta-semialdehyde [(S)-ASA] and pyruvate to 4-hydroxy-tetrahydrodipicolinate (HTPA). The polypeptide is 4-hydroxy-tetrahydrodipicolinate synthase (Vibrio cholerae serotype O1 (strain M66-2)).